A 293-amino-acid chain; its full sequence is SAGA-associated factor 29 (293 aa).

Positions 12–88 form a coiled coil; it reads ELLAELQRLL…KALDKIAEIK (77 aa). Positions 152–293 constitute an SGF29 C-terminal domain; sequence GDYVAKPGDK…VVACKETKKK (142 aa). 2 histone H3K4me3 N-terminus binding regions span residues 194–196 and 240–243; these read DID and QTTC. A histone H3K4me3 binding region spans residues 264–266; that stretch reads FED.

It belongs to the SGF29 family. As to quaternary structure, interacts with dimethylated and trimethylated 'Lys-4' of histone H3 (H3K4me2 and H3K4me3), with a preference for the trimethylated form (H3K4me3). Component of some SAGA-type complexes. Component of the ADA2A-containing complex (ATAC).

The protein resides in the nucleus. Its function is as follows. Chromatin reader component of some histone acetyltransferase (HAT) SAGA-type complexes like the TFTC-HAT, ATAC or STAGA complexes. SGF29 specifically recognizes and binds methylated 'Lys-4' of histone H3 (H3K4me), with a preference for trimethylated form (H3K4me3). In the SAGA-type complexes, SGF29 is required to recruit complexes to H3K4me. Also binds non-histone proteins that are methylated on Lys residues. The chain is SAGA-associated factor 29 from Gallus gallus (Chicken).